Reading from the N-terminus, the 216-residue chain is uncharacterized protein (216 aa).

A signal peptide spans 1-17 (MLKKIIILFLGMFLLSA). A lipid anchor (N-palmitoyl cysteine) is attached at Cys-18. Cys-18 is lipidated: S-diacylglycerol cysteine. Residues 133 to 162 (SDKEKKIQEELNQIKAMLRETKRDISKYTC) are a coiled coil.

Its subcellular location is the cell membrane. This is an uncharacterized protein from Rickettsia conorii (strain ATCC VR-613 / Malish 7).